Consider the following 225-residue polypeptide: NAD(P)H-quinone oxidoreductase subunit K, chloroplastic (225 aa).

4 residues coordinate [4Fe-4S] cluster: Cys43, Cys44, Cys108, and Cys139.

The protein belongs to the complex I 20 kDa subunit family. NDH is composed of at least 16 different subunits, 5 of which are encoded in the nucleus. [4Fe-4S] cluster is required as a cofactor.

Its subcellular location is the plastid. The protein localises to the chloroplast thylakoid membrane. It catalyses the reaction a plastoquinone + NADH + (n+1) H(+)(in) = a plastoquinol + NAD(+) + n H(+)(out). The catalysed reaction is a plastoquinone + NADPH + (n+1) H(+)(in) = a plastoquinol + NADP(+) + n H(+)(out). Functionally, NDH shuttles electrons from NAD(P)H:plastoquinone, via FMN and iron-sulfur (Fe-S) centers, to quinones in the photosynthetic chain and possibly in a chloroplast respiratory chain. The immediate electron acceptor for the enzyme in this species is believed to be plastoquinone. Couples the redox reaction to proton translocation, and thus conserves the redox energy in a proton gradient. This chain is NAD(P)H-quinone oxidoreductase subunit K, chloroplastic, found in Nicotiana tabacum (Common tobacco).